A 598-amino-acid polypeptide reads, in one-letter code: N-acetylmuramoyl-L-alanine amidase (598 aa).

Positions 1–31 (MSPGNWKTTMVVRGILLILYGLLLQPEPGTA) are cleaved as a signal peptide. Disordered stretches follow at residues 172–194 (SSAHKDTSADVNSADVGTLSPNV) and 212–233 (STGVQVTSPDVQVSSPDTKAKS). At Ser261 the chain carries Phosphoserine. Asn353 carries an N-linked (GlcNAc...) asparagine glycan. Residues 428 to 554 (FLYIHHTYVP…RQLVRTDCPG (127 aa)) form the N-acetylmuramoyl-L-alanine amidase domain. His432 serves as a coordination point for Zn(2+). A disulfide bond links Cys441 and Cys447. Residue Asn507 is glycosylated (N-linked (GlcNAc...) asparagine). Zn(2+) contacts are provided by His544 and Cys552.

The protein belongs to the N-acetylmuramoyl-L-alanine amidase 2 family. Zn(2+) serves as cofactor.

It is found in the secreted. The protein resides in the membrane. It carries out the reaction Hydrolyzes the link between N-acetylmuramoyl residues and L-amino acid residues in certain cell-wall glycopeptides.. May play a scavenger role by digesting biologically active peptidoglycan (PGN) into biologically inactive fragments. Has no direct bacteriolytic activity. This is N-acetylmuramoyl-L-alanine amidase (PGLYRP2) from Sus scrofa (Pig).